The sequence spans 301 residues: Sulfate adenylyltransferase subunit 2 (301 aa).

The protein belongs to the PAPS reductase family. CysD subfamily. As to quaternary structure, heterodimer composed of CysD, the smaller subunit, and CysN.

The enzyme catalyses sulfate + ATP + H(+) = adenosine 5'-phosphosulfate + diphosphate. The protein operates within sulfur metabolism; hydrogen sulfide biosynthesis; sulfite from sulfate: step 1/3. Its function is as follows. With CysN forms the ATP sulfurylase (ATPS) that catalyzes the adenylation of sulfate producing adenosine 5'-phosphosulfate (APS) and diphosphate, the first enzymatic step in sulfur assimilation pathway. APS synthesis involves the formation of a high-energy phosphoric-sulfuric acid anhydride bond driven by GTP hydrolysis by CysN coupled to ATP hydrolysis by CysD. This Shewanella loihica (strain ATCC BAA-1088 / PV-4) protein is Sulfate adenylyltransferase subunit 2.